A 232-amino-acid polypeptide reads, in one-letter code: Large ribosomal subunit protein uL1 (232 aa).

This sequence belongs to the universal ribosomal protein uL1 family. As to quaternary structure, part of the 50S ribosomal subunit.

Binds directly to 23S rRNA. The L1 stalk is quite mobile in the ribosome, and is involved in E site tRNA release. Functionally, protein L1 is also a translational repressor protein, it controls the translation of the L11 operon by binding to its mRNA. This chain is Large ribosomal subunit protein uL1, found in Methylorubrum extorquens (strain CM4 / NCIMB 13688) (Methylobacterium extorquens).